Reading from the N-terminus, the 305-residue chain is Acetyl-coenzyme A carboxylase carboxyl transferase subunit alpha (305 aa).

The CoA carboxyltransferase C-terminal domain occupies Ala33–Asp280.

This sequence belongs to the AccA family. Acetyl-CoA carboxylase is a heterohexamer composed of biotin carboxyl carrier protein (AccB), biotin carboxylase (AccC) and two subunits each of ACCase subunit alpha (AccA) and ACCase subunit beta (AccD).

The protein localises to the cytoplasm. It catalyses the reaction N(6)-carboxybiotinyl-L-lysyl-[protein] + acetyl-CoA = N(6)-biotinyl-L-lysyl-[protein] + malonyl-CoA. It functions in the pathway lipid metabolism; malonyl-CoA biosynthesis; malonyl-CoA from acetyl-CoA: step 1/1. Functionally, component of the acetyl coenzyme A carboxylase (ACC) complex. First, biotin carboxylase catalyzes the carboxylation of biotin on its carrier protein (BCCP) and then the CO(2) group is transferred by the carboxyltransferase to acetyl-CoA to form malonyl-CoA. In Treponema denticola (strain ATCC 35405 / DSM 14222 / CIP 103919 / JCM 8153 / KCTC 15104), this protein is Acetyl-coenzyme A carboxylase carboxyl transferase subunit alpha.